The primary structure comprises 189 residues: NADH-quinone oxidoreductase subunit B (189 aa).

Positions 39, 40, 104, and 135 each coordinate [4Fe-4S] cluster.

Belongs to the complex I 20 kDa subunit family. In terms of assembly, NDH-1 is composed of 14 different subunits. Subunits NuoB, C, D, E, F, and G constitute the peripheral sector of the complex. Requires [4Fe-4S] cluster as cofactor.

The protein localises to the cell inner membrane. The catalysed reaction is a quinone + NADH + 5 H(+)(in) = a quinol + NAD(+) + 4 H(+)(out). In terms of biological role, NDH-1 shuttles electrons from NADH, via FMN and iron-sulfur (Fe-S) centers, to quinones in the respiratory chain. The immediate electron acceptor for the enzyme in this species is believed to be a menaquinone. Couples the redox reaction to proton translocation (for every two electrons transferred, four hydrogen ions are translocated across the cytoplasmic membrane), and thus conserves the redox energy in a proton gradient. In Pelodictyon phaeoclathratiforme (strain DSM 5477 / BU-1), this protein is NADH-quinone oxidoreductase subunit B.